The chain runs to 235 residues: Mitochondrial inner membrane protease ATP23 homolog (235 aa).

His114 contributes to the a divalent metal cation binding site. The active site involves Glu115. His118 serves as a coordination point for a divalent metal cation.

The protein belongs to the peptidase M76 family.

In Xenopus laevis (African clawed frog), this protein is Mitochondrial inner membrane protease ATP23 homolog (atp23).